The primary structure comprises 166 residues: 2-amino-4-hydroxy-6-hydroxymethyldihydropteridine pyrophosphokinase (166 aa).

This sequence belongs to the HPPK family.

It catalyses the reaction 6-hydroxymethyl-7,8-dihydropterin + ATP = (7,8-dihydropterin-6-yl)methyl diphosphate + AMP + H(+). Its pathway is cofactor biosynthesis; tetrahydrofolate biosynthesis; 2-amino-4-hydroxy-6-hydroxymethyl-7,8-dihydropteridine diphosphate from 7,8-dihydroneopterin triphosphate: step 4/4. Catalyzes the transfer of pyrophosphate from adenosine triphosphate (ATP) to 6-hydroxymethyl-7,8-dihydropterin, an enzymatic step in folate biosynthesis pathway. The protein is 2-amino-4-hydroxy-6-hydroxymethyldihydropteridine pyrophosphokinase (folK) of Streptococcus pyogenes serotype M18 (strain MGAS8232).